The chain runs to 178 residues: MAEAITIARPYAEAVFRLAQGSGSLSLWSEMLGIVSSVIQESQVNALIGNPQIPSIKLREIVFSICDKELNEDGRRLISLLIENGRLLVLPQISELYEQLKAQHESVLEAEIVSAFPLESYQLEKLISVLEVKFQHKVKAQVSVDSGLIGGVKIEIGDQVIDSSVSGKLEAMAATLKS.

It belongs to the ATPase delta chain family. In terms of assembly, F-type ATPases have 2 components, F(1) - the catalytic core - and F(0) - the membrane proton channel. F(1) has five subunits: alpha(3), beta(3), gamma(1), delta(1), epsilon(1). F(0) has three main subunits: a(1), b(2) and c(10-14). The alpha and beta chains form an alternating ring which encloses part of the gamma chain. F(1) is attached to F(0) by a central stalk formed by the gamma and epsilon chains, while a peripheral stalk is formed by the delta and b chains.

It is found in the cell inner membrane. In terms of biological role, f(1)F(0) ATP synthase produces ATP from ADP in the presence of a proton or sodium gradient. F-type ATPases consist of two structural domains, F(1) containing the extramembraneous catalytic core and F(0) containing the membrane proton channel, linked together by a central stalk and a peripheral stalk. During catalysis, ATP synthesis in the catalytic domain of F(1) is coupled via a rotary mechanism of the central stalk subunits to proton translocation. Functionally, this protein is part of the stalk that links CF(0) to CF(1). It either transmits conformational changes from CF(0) to CF(1) or is implicated in proton conduction. This chain is ATP synthase subunit delta, found in Nitrosomonas eutropha (strain DSM 101675 / C91 / Nm57).